Here is an 841-residue protein sequence, read N- to C-terminus: DNA ligase (841 aa).

Residues 33–37 (DAQYD), 82–83 (SL), and glutamate 114 contribute to the NAD(+) site. Lysine 116 serves as the catalytic N6-AMP-lysine intermediate. Arginine 137, glutamate 174, lysine 300, and lysine 324 together coordinate NAD(+). The Zn(2+) site is built by cysteine 418, cysteine 421, cysteine 436, and cysteine 442. In terms of domain architecture, BRCT spans 758-841 (EKTGPLDGQT…AFLGEHGQQR (84 aa)).

This sequence belongs to the NAD-dependent DNA ligase family. LigA subfamily. The cofactor is Mg(2+). Mn(2+) serves as cofactor.

The enzyme catalyses NAD(+) + (deoxyribonucleotide)n-3'-hydroxyl + 5'-phospho-(deoxyribonucleotide)m = (deoxyribonucleotide)n+m + AMP + beta-nicotinamide D-nucleotide.. DNA ligase that catalyzes the formation of phosphodiester linkages between 5'-phosphoryl and 3'-hydroxyl groups in double-stranded DNA using NAD as a coenzyme and as the energy source for the reaction. It is essential for DNA replication and repair of damaged DNA. This is DNA ligase from Xanthomonas oryzae pv. oryzae (strain KACC10331 / KXO85).